The following is a 574-amino-acid chain: Excitatory amino acid transporter 2 (574 aa).

The Cytoplasmic segment spans residues methionine 1 to asparagine 44. A phosphoserine mark is found at serine 3, serine 21, and serine 25. Cysteine 38 carries S-palmitoyl cysteine lipidation. A helical membrane pass occupies residues leucine 45–leucine 64. The Extracellular segment spans residues arginine 65–arginine 87. A helical transmembrane segment spans residues methionine 88–leucine 108. Over aspartate 109–alanine 120 the chain is Cytoplasmic. A helical transmembrane segment spans residues methionine 121–isoleucine 142. Residues histidine 143–glutamate 235 lie on the Extracellular side of the membrane. 2 N-linked (GlcNAc...) asparagine glycosylation sites follow: asparagine 206 and asparagine 216. The chain crosses the membrane as a helical span at residues phenylalanine 236–methionine 259. The Cytoplasmic portion of the chain corresponds to glycine 260–aspartate 268. The helical transmembrane segment at phenylalanine 269–isoleucine 296 threads the bilayer. At cysteine 297–methionine 317 the chain is on the extracellular side. Residues valine 318 to valine 339 form a helical membrane-spanning segment. The Cytoplasmic segment spans residues threonine 340 to proline 344. Residues phenylalanine 345–leucine 375 constitute an intramembrane region (discontinuously helical). Alanine 362–serine 364 provides a ligand contact to L-aspartate. Over glutamate 376 to arginine 384 the chain is Cytoplasmic. The helical transmembrane segment at valine 385–phenylalanine 411 threads the bilayer. Positions 393, 395, and 397 each coordinate Na(+). Threonine 401 is an L-aspartate binding site. The Extracellular portion of the chain corresponds to isoleucine 412–glutamine 424. Positions isoleucine 425–glycine 458 form an intramembrane region, discontinuously helical. An L-aspartate-binding site is contributed by isoleucine 442–glycine 446. The Extracellular portion of the chain corresponds to leucine 459 to aspartate 471. The helical transmembrane segment at tryptophan 472–valine 493 threads the bilayer. Residues aspartate 475 and asparagine 482 each contribute to the L-aspartate site. 2 residues coordinate Na(+): asparagine 482 and aspartate 486. The Cytoplasmic portion of the chain corresponds to tyrosine 494–lysine 574. 4 positions are modified to phosphoserine: serine 506, serine 521, serine 532, and serine 534. Tyrosine 539 bears the Phosphotyrosine mark. Phosphoserine occurs at positions 544, 560, and 564.

Belongs to the dicarboxylate/amino acid:cation symporter (DAACS) (TC 2.A.23) family. SLC1A2 subfamily. In terms of assembly, homotrimer. Isoform 3 can oligomerize with isoform 1. Interacts with AJUBA. Post-translationally, glycosylated. In terms of processing, palmitoylation at Cys-38 is not required for correct subcellular localization, but is important for glutamate uptake activity.

It is found in the cell membrane. It carries out the reaction K(+)(in) + L-glutamate(out) + 3 Na(+)(out) + H(+)(out) = K(+)(out) + L-glutamate(in) + 3 Na(+)(in) + H(+)(in). The catalysed reaction is K(+)(in) + L-aspartate(out) + 3 Na(+)(out) + H(+)(out) = K(+)(out) + L-aspartate(in) + 3 Na(+)(in) + H(+)(in). The enzyme catalyses D-aspartate(out) + K(+)(in) + 3 Na(+)(out) + H(+)(out) = D-aspartate(in) + K(+)(out) + 3 Na(+)(in) + H(+)(in). Functionally, sodium-dependent, high-affinity amino acid transporter that mediates the uptake of L-glutamate and also L-aspartate and D-aspartate. Functions as a symporter that transports one amino acid molecule together with two or three Na(+) ions and one proton, in parallel with the counter-transport of one K(+) ion. Mediates Cl(-) flux that is not coupled to amino acid transport; this avoids the accumulation of negative charges due to aspartate and Na(+) symport. Essential for the rapid removal of released glutamate from the synaptic cleft, and for terminating the postsynaptic action of glutamate. The sequence is that of Excitatory amino acid transporter 2 from Homo sapiens (Human).